Reading from the N-terminus, the 665-residue chain is non-specific serine/threonine protein kinase (665 aa).

The Protein kinase domain maps to 145 to 597 (FDVHCRIGSG…AEEALKHPFF (453 aa)). Residues 151 to 159 (IGSGTFSTV) and K181 contribute to the ATP site. Catalysis depends on D268, which acts as the Proton acceptor.

Belongs to the protein kinase superfamily. Ser/Thr protein kinase family. Interacts with chif (via N-terminus).

The enzyme catalyses L-seryl-[protein] + ATP = O-phospho-L-seryl-[protein] + ADP + H(+). It catalyses the reaction L-threonyl-[protein] + ATP = O-phospho-L-threonyl-[protein] + ADP + H(+). Functionally, probable serine/threonine protein kinase that forms a complex with the N-terminal peptide of the chiffon protein and may be involved in regulating meiotic processes in the male testis. The protein is non-specific serine/threonine protein kinase of Drosophila melanogaster (Fruit fly).